The following is a 79-amino-acid chain: RNA-binding protein KhpA (79 aa).

The KH domain occupies 32–79 (FLEYHLNLDQSDVGRVIGRKGRTISAIRTIVYSVPTEYKKVRIVIDEK).

Belongs to the KhpA RNA-binding protein family. In terms of assembly, forms a complex with KhpB. KhpA and KhpB colocalize throughout the cell cycle, with some increase at midcell in dividing cells.

The protein localises to the cytoplasm. In terms of biological role, a probable RNA chaperone. Forms a complex with KhpB which presumably binds to about 170 cellular RNAs (mRNA, tRNA intergenic RNA and sRNAs); the proteins alone each bind the same set of RNAs. A mutation in this gene suppresses the requirement for PBP2b (penA, a transpeptidase) in peripheral peptidoglycan (PG) synthesis. Probably plays a role in PG homeostasis and regulating peripheral PG synthesis. In Streptococcus pneumoniae serotype 2 (strain D39 / NCTC 7466), this protein is RNA-binding protein KhpA.